A 551-amino-acid chain; its full sequence is Malate synthase, glyoxysomal (551 aa).

Arginine 174 functions as the Proton acceptor in the catalytic mechanism. Catalysis depends on aspartate 458, which acts as the Proton donor.

Belongs to the malate synthase family.

It localises to the glyoxysome. It carries out the reaction glyoxylate + acetyl-CoA + H2O = (S)-malate + CoA + H(+). It participates in carbohydrate metabolism; glyoxylate cycle; (S)-malate from isocitrate: step 2/2. The polypeptide is Malate synthase, glyoxysomal (PMS1) (Candida tropicalis (Yeast)).